The chain runs to 59 residues: Protein QUA-QUINE STARCH (59 aa).

As to expression, expressed in hypocotyls, leaves, vasculature, hydathodes, trichomes, pedicels, sepals, filaments, mature pollen, stigma papillae, styles, siliques, root and shoot tips, but not in shoot meristem, petals or root epidermis.

It localises to the cytoplasm. Involved in regulating carbon and nitrogen allocation to starch and protein. This is Protein QUA-QUINE STARCH from Arabidopsis thaliana (Mouse-ear cress).